The chain runs to 420 residues: MQDIVRPIDECRVCGHDDWLDVVSFGSTPLAGNLLGDEDDAGGETLFPLDVVVCRRCWLMTLRHVIEPDVLFGHYRYVASDAGSIIQHMRKLVDLCVERIGLTDGDLVVEFGSNTGAHLELFRQAGPRVVGVDPARNLAGVANDRGVETIPAGFTAEVGEEIATRHGLARLVYGRQCFAHIPDIHEVLNGVSALLAPDGLFFVEVPYLVELLKNNQFDTIFHEHFSYFSLGSLCTLFESHGLRVVDVHTADVHGGSIVVFAAPAAADHEVRPAVAEMLAEERSQGIAEERTYREFADRTERVRAQIRELVRGVVADGKTVAGYGAPTKGSALLAACGLGHQEIRFCSDTTVLKQGKILPGSRIPIWSPEQAAGHVPDYYLLLAWNYAPEIIDNEKEFLENGGRFIVPIPEPRVISAESTL.

Belongs to the methyltransferase superfamily.

It functions in the pathway antibiotic biosynthesis; novobiocin biosynthesis. C-methyltransferase that acts together with NovW to catalyze the formation of dTDP-4-keto-6-deoxy-5-C-methyl-L-lyxo-hexose from dTDP-4-keto-6-deoxy-D-glucose in the novobiocin biosynthesis pathway, an aminocoumarin family antibiotic that targets bacterial DNA gyrases. This Streptomyces niveus (Streptomyces spheroides) protein is C-methyltransferase NovU (novU).